The sequence spans 590 residues: MFLIFFLFFIMFGFISGSFMFGRNFLSFWLSLVMIIFIVLCMIFSFLMVSVCLYGYYYYDFCLILMLDFCFIWLTYVCSGFYMFIMLLINMVFCFIVFYAFYYMYFDMLLGRFLIIFWIFVVCMNLFILSYDFLTAYCGWELLGLFSFFLISYFWYRFFALKFGFKAFFIGKIGDVLLIFAFSIIFLSNGFCMTTFYFLNFFCMDYYYIEFSICLLVGCAFTKSTQFGLHIWLPDAMEGPIPVSALIHAATLVVCGIILLSFVYWCFDFWFSYFYNLIGWSTLILILMTLCVFYNFDVKRYVAFSTICQISFSMFCCLCIDIYIGSLFFCYHMFYKATLFIVLGIWIHIFFGLQDLRCYFFMYFCGCVLARLLLIFAILNSCSIWFLCGFYCKDMLLALLMLLSFYNIIEFLFISIIFIFFTMIYNYFLLFFLMFVFKCFCLVDCLFLLFDYECCLVYCLISLYMCILSIFFIIDFVCIFVFSSYCVFWSFFLNFYNFFDIAIFVVFLILSVGFLYYGCLFFYFFNIDCIMLFWRIFFVIIILVVFMIFCCWYFVCMIIFMLLFVWNFVIYFRYNLKYCLFFCILWILYV.

18 helical membrane passes run 1–21 (MFLI…SFMF), 28–48 (FWLS…SFLM), 58–78 (YYDF…TYVC), 81–101 (FYMF…FYAF), 113–133 (FLII…SYDF), 136–156 (AYCG…YFWY), 176–198 (VLLI…TFYF), 245–265 (ALIH…FVYW), 273–293 (YFYN…LCVF), 310–330 (ISFS…LFFC), 333–353 (MFYK…FFGL), 372–392 (LLLI…GFYC), 395–415 (MLLA…LFIS), 428–450 (FLLF…FLLF), 461–481 (ISLY…CIFV), 501–521 (IAIF…GCLF), 536–556 (IFFV…YFVC), and 568–588 (FVIY…LWIL).

It belongs to the complex I subunit 5 family.

It localises to the mitochondrion inner membrane. It carries out the reaction a ubiquinone + NADH + 5 H(+)(in) = a ubiquinol + NAD(+) + 4 H(+)(out). Its function is as follows. Core subunit of the mitochondrial membrane respiratory chain NADH dehydrogenase (Complex I) that is believed to belong to the minimal assembly required for catalysis. Complex I functions in the transfer of electrons from NADH to the respiratory chain. The immediate electron acceptor for the enzyme is believed to be ubiquinone. This chain is NADH-ubiquinone oxidoreductase chain 5 (ND5), found in Trypanosoma brucei brucei.